Here is a 310-residue protein sequence, read N- to C-terminus: Glutaminase (310 aa).

Residues S67, N118, E161, N168, Y192, Y244, and V262 each contribute to the substrate site.

The protein belongs to the glutaminase family. Homotetramer.

It catalyses the reaction L-glutamine + H2O = L-glutamate + NH4(+). The sequence is that of Glutaminase from Legionella pneumophila (strain Lens).